The primary structure comprises 299 residues: Protease HtpX homolog (299 aa).

The next 2 membrane-spanning stretches (helical) occupy residues 16–36 (VMAAFVILLAVIGLAVGYVFF) and 38–58 (SAIAGLLVALIAAVFYMVLMI). A Zn(2+)-binding site is contributed by histidine 144. Residue glutamate 145 is part of the active site. Histidine 148 provides a ligand contact to Zn(2+). 2 helical membrane passes run 159-179 (IALALTAAISLLVNWGMNAFW) and 198-218 (VLLMILAIVVIILAPLAASLV). Residue glutamate 227 participates in Zn(2+) binding.

This sequence belongs to the peptidase M48B family. Zn(2+) is required as a cofactor.

It localises to the cell membrane. The protein is Protease HtpX homolog of Lactiplantibacillus plantarum (strain ATCC BAA-793 / NCIMB 8826 / WCFS1) (Lactobacillus plantarum).